We begin with the raw amino-acid sequence, 149 residues long: Large ribosomal subunit protein bL9 (149 aa).

This sequence belongs to the bacterial ribosomal protein bL9 family.

Functionally, binds to the 23S rRNA. In Xanthomonas axonopodis pv. citri (strain 306), this protein is Large ribosomal subunit protein bL9.